Consider the following 163-residue polypeptide: uncharacterized protein (163 aa).

This is an uncharacterized protein from Rickettsia conorii (strain ATCC VR-613 / Malish 7).